The sequence spans 141 residues: Large ribosomal subunit protein uL16 (141 aa).

The protein belongs to the universal ribosomal protein uL16 family. In terms of assembly, part of the 50S ribosomal subunit.

Binds 23S rRNA and is also seen to make contacts with the A and possibly P site tRNAs. The chain is Large ribosomal subunit protein uL16 from Hydrogenobaculum sp. (strain Y04AAS1).